An 84-amino-acid chain; its full sequence is Inactive transposase YbfQ (84 aa).

The chain is Inactive transposase YbfQ (ybfQ) from Escherichia coli (strain K12).